Reading from the N-terminus, the 262-residue chain is 2-keto-4-pentenoate hydratase (262 aa).

It belongs to the hydratase/decarboxylase family. MhpD subfamily. A divalent metal cation is required as a cofactor.

It carries out the reaction (S)-4-hydroxy-2-oxopentanoate = (2Z)-2-hydroxypenta-2,4-dienoate + H2O. The protein operates within aromatic compound metabolism; 3-phenylpropanoate degradation. Functionally, catalyzes the conversion of 2-hydroxypentadienoic acid (enolic form of 2-oxopent-4-enoate) to 4-hydroxy-2-ketopentanoic acid. This chain is 2-keto-4-pentenoate hydratase, found in Paraburkholderia phymatum (strain DSM 17167 / CIP 108236 / LMG 21445 / STM815) (Burkholderia phymatum).